The sequence spans 304 residues: Glycine--tRNA ligase alpha subunit (304 aa).

It belongs to the class-II aminoacyl-tRNA synthetase family. Tetramer of two alpha and two beta subunits.

It localises to the cytoplasm. The enzyme catalyses tRNA(Gly) + glycine + ATP = glycyl-tRNA(Gly) + AMP + diphosphate. This Tolumonas auensis (strain DSM 9187 / NBRC 110442 / TA 4) protein is Glycine--tRNA ligase alpha subunit.